We begin with the raw amino-acid sequence, 297 residues long: Bifunctional protein FolD (297 aa).

NADP(+) contacts are provided by residues 167–169 (GRS) and I233.

Belongs to the tetrahydrofolate dehydrogenase/cyclohydrolase family. As to quaternary structure, homodimer.

It catalyses the reaction (6R)-5,10-methylene-5,6,7,8-tetrahydrofolate + NADP(+) = (6R)-5,10-methenyltetrahydrofolate + NADPH. The enzyme catalyses (6R)-5,10-methenyltetrahydrofolate + H2O = (6R)-10-formyltetrahydrofolate + H(+). The protein operates within one-carbon metabolism; tetrahydrofolate interconversion. Catalyzes the oxidation of 5,10-methylenetetrahydrofolate to 5,10-methenyltetrahydrofolate and then the hydrolysis of 5,10-methenyltetrahydrofolate to 10-formyltetrahydrofolate. The polypeptide is Bifunctional protein FolD (Zymomonas mobilis subsp. mobilis (strain ATCC 31821 / ZM4 / CP4)).